Here is a 140-residue protein sequence, read N- to C-terminus: uncharacterized protein (140 aa).

This is an uncharacterized protein from Xylella fastidiosa (strain 9a5c).